A 185-amino-acid chain; its full sequence is Putative F-box protein At3g17400 (185 aa).

In terms of domain architecture, F-box spans 1–47 (MMTLSDLPSDLAEEVLSKIPVTSLRGVRATCKKWNTLSKDRSFTRKH).

This chain is Putative F-box protein At3g17400, found in Arabidopsis thaliana (Mouse-ear cress).